We begin with the raw amino-acid sequence, 300 residues long: Cation-efflux pump FieF (300 aa).

4 helical membrane-spanning segments follow: residues 12–32, 40–60, 82–102, and 114–134; these read AALS…FAWW, LAAL…LFVV, AALA…LTGF, and PSIG…LVTF. Zn(2+) is bound by residues Asp-45 and Asp-49. Zn(2+) is bound by residues His-153 and Asp-157. The next 2 membrane-spanning stretches (helical) occupy residues 155 to 175 and 178 to 198; these read QSDV…WYGF and ADAL…LRMG.

This sequence belongs to the cation diffusion facilitator (CDF) transporter (TC 2.A.4) family. FieF subfamily. Homodimer.

It is found in the cell inner membrane. The catalysed reaction is Zn(2+)(in) + H(+)(out) = Zn(2+)(out) + H(+)(in). It catalyses the reaction Cd(2+)(in) + H(+)(out) = Cd(2+)(out) + H(+)(in). The enzyme catalyses Fe(2+)(in) + H(+)(out) = Fe(2+)(out) + H(+)(in). Divalent metal cation transporter which exports Zn(2+), Cd(2+) and possibly Fe(2+). May be involved in zinc and iron detoxification by efflux. This chain is Cation-efflux pump FieF, found in Yersinia pestis bv. Antiqua (strain Antiqua).